A 652-amino-acid polypeptide reads, in one-letter code: Leucine aminopeptidase 2 (652 aa).

A peptide contacts are provided by residues 165–167 and 293–298; these read QLE and PYGGME. Position 322 (H322) interacts with Zn(2+). The Proton acceptor role is filled by E323. 2 residues coordinate Zn(2+): H326 and E345. The Proton donor role is filled by Y411.

It belongs to the peptidase M1 family. Zn(2+) is required as a cofactor.

It localises to the cytoplasm. Its subcellular location is the nucleus. It carries out the reaction an epoxide + H2O = an ethanediol. Functionally, aminopeptidase that preferentially cleaves di- and tripeptides. Also has low epoxide hydrolase activity (in vitro). Can hydrolyze the epoxide leukotriene LTA(4) but it forms preferentially 5,6-dihydroxy-7,9,11,14-eicosatetraenoic acid rather than the cytokine leukotriene B(4) as the product compared to the homologous mammalian enzyme (in vitro). The polypeptide is Leucine aminopeptidase 2 (Candida glabrata (strain ATCC 2001 / BCRC 20586 / JCM 3761 / NBRC 0622 / NRRL Y-65 / CBS 138) (Yeast)).